The following is a 28-amino-acid chain: Toxin a (28 aa).

One can recognise an LCN-type CS-alpha/beta domain in the interval 3–28 (VPGNYPLDSYGNCYPCTILGDNQYCI).

Belongs to the long (3 C-C) scorpion toxin superfamily. Expressed by the venom gland.

The protein localises to the secreted. In terms of biological role, binds to sodium channels (Nav) and affects the channel activation process. The polypeptide is Toxin a (Androctonus crassicauda (Arabian fat-tailed scorpion)).